The following is a 147-amino-acid chain: Small ribosomal subunit protein uS12 (147 aa).

Belongs to the universal ribosomal protein uS12 family. As to quaternary structure, part of the 30S ribosomal subunit.

Functionally, with S4 and S5 plays an important role in translational accuracy. Located at the interface of the 30S and 50S subunits. The polypeptide is Small ribosomal subunit protein uS12 (Methanococcus aeolicus (strain ATCC BAA-1280 / DSM 17508 / OCM 812 / Nankai-3)).